Here is a 207-residue protein sequence, read N- to C-terminus: Urease accessory protein UreG (207 aa).

14 to 21 contributes to the GTP binding site; that stretch reads GPVGSGKT.

It belongs to the SIMIBI class G3E GTPase family. UreG subfamily. In terms of assembly, homodimer. UreD, UreF and UreG form a complex that acts as a GTP-hydrolysis-dependent molecular chaperone, activating the urease apoprotein by helping to assemble the nickel containing metallocenter of UreC. The UreE protein probably delivers the nickel.

It is found in the cytoplasm. Functionally, facilitates the functional incorporation of the urease nickel metallocenter. This process requires GTP hydrolysis, probably effectuated by UreG. In Pseudomonas putida (strain GB-1), this protein is Urease accessory protein UreG.